Reading from the N-terminus, the 166-residue chain is Endoribonuclease YbeY (166 aa).

Zn(2+) contacts are provided by His125, His129, and His135.

It belongs to the endoribonuclease YbeY family. The cofactor is Zn(2+).

It is found in the cytoplasm. In terms of biological role, single strand-specific metallo-endoribonuclease involved in late-stage 70S ribosome quality control and in maturation of the 3' terminus of the 16S rRNA. This chain is Endoribonuclease YbeY, found in Alkalilimnicola ehrlichii (strain ATCC BAA-1101 / DSM 17681 / MLHE-1).